The sequence spans 596 residues: Aspartate--tRNA(Asp/Asn) ligase (596 aa).

L-aspartate is bound at residue Glu175. Residues 199–202 (QQYK) are aspartate. Arg221 and His454 together coordinate L-aspartate. 221 to 223 (RDE) contacts ATP. Glu488 provides a ligand contact to ATP. Residue Arg495 coordinates L-aspartate. Position 540–543 (540–543 (GVDR)) interacts with ATP.

It belongs to the class-II aminoacyl-tRNA synthetase family. Type 1 subfamily. Homodimer.

It is found in the cytoplasm. It carries out the reaction tRNA(Asx) + L-aspartate + ATP = L-aspartyl-tRNA(Asx) + AMP + diphosphate. Functionally, aspartyl-tRNA synthetase with relaxed tRNA specificity since it is able to aspartylate not only its cognate tRNA(Asp) but also tRNA(Asn). Reaction proceeds in two steps: L-aspartate is first activated by ATP to form Asp-AMP and then transferred to the acceptor end of tRNA(Asp/Asn). The polypeptide is Aspartate--tRNA(Asp/Asn) ligase (Bartonella bacilliformis (strain ATCC 35685 / KC583 / Herrer 020/F12,63)).